Consider the following 635-residue polypeptide: Protein MICRORCHIDIA 1 (635 aa).

A disordered region spans residues 491–511 (RTVIPDQPPTVNTYNPSPLPS). Residues 588–635 (MRCEEYVKKENEVEQTVKSLEKELEEIKSKCAQLALLVDAKKKEMQQV) are a coiled coil.

Belongs to the MORC ATPase protein family. In terms of assembly, homodimer and heterodimer with MORC6. Component of an RNA-directed DNA methylation (RdDM) complex that contains at least MORC6, MORC1/CRT1, MORC2, SWI3D and SUVH9. Binds directly to SUVH2 and SUVH9. Interacts with the resistance proteins RCY1, RPM1, SNC1, RPP8, SSI4 and RPS2. The interactions with various resistance proteins are disrupted when these resistance proteins are activated. Interacts with the PAMP recognition receptor FLS2. It depends on Mg(2+) as a cofactor. Mn(2+) is required as a cofactor. As to expression, expressed constitutively.

The protein resides in the nucleus. Its subcellular location is the endosome. Functionally, mediator of defense signaling triggered by distinct classes of R proteins. Required during hypersensitive response (HR) that confers disease resistance to turnip crinkle virus (TCV). Exhibits ATPase activity. Contributes to resistance against Pseudomonas syringae and Hyaloperonospora arabidopsidis, at early stages prior to cytosolic calcium ions Ca(2+) accumulation. Required for pathogen-associated molecular pattern (PAMP)-triggered immunity (PTI), basal resistance, non-host resistance and systemic acquired resistance (SAR). Binds DNA/RNA in a non-specific manner and exhibits endonuclease activity. Probably involved in DNA repair. Required for both RPP8- and SSI4-mediated resistance responses, thus being involved in both TIR- and CC-NB-LRR pathways. Involved in RNA-directed DNA methylation (RdDM) as a component of the RdDM machinery and required for gene silencing. May also be involved in the regulation of chromatin architecture to maintain gene silencing. The chain is Protein MICRORCHIDIA 1 from Arabidopsis thaliana (Mouse-ear cress).